Reading from the N-terminus, the 89-residue chain is Large ribosomal subunit protein uL23c (89 aa).

The protein belongs to the universal ribosomal protein uL23 family. As to quaternary structure, part of the 50S ribosomal subunit.

It is found in the plastid. The protein resides in the chloroplast. In terms of biological role, binds to 23S rRNA. The sequence is that of Large ribosomal subunit protein uL23c (rpl23) from Zygnema circumcarinatum (Green alga).